The primary structure comprises 179 residues: ATP synthase subunit delta (179 aa).

It belongs to the ATPase delta chain family. F-type ATPases have 2 components, F(1) - the catalytic core - and F(0) - the membrane proton channel. F(1) has five subunits: alpha(3), beta(3), gamma(1), delta(1), epsilon(1). F(0) has three main subunits: a(1), b(2) and c(10-14). The alpha and beta chains form an alternating ring which encloses part of the gamma chain. F(1) is attached to F(0) by a central stalk formed by the gamma and epsilon chains, while a peripheral stalk is formed by the delta and b chains.

The protein localises to the cell membrane. In terms of biological role, f(1)F(0) ATP synthase produces ATP from ADP in the presence of a proton or sodium gradient. F-type ATPases consist of two structural domains, F(1) containing the extramembraneous catalytic core and F(0) containing the membrane proton channel, linked together by a central stalk and a peripheral stalk. During catalysis, ATP synthesis in the catalytic domain of F(1) is coupled via a rotary mechanism of the central stalk subunits to proton translocation. Functionally, this protein is part of the stalk that links CF(0) to CF(1). It either transmits conformational changes from CF(0) to CF(1) or is implicated in proton conduction. The polypeptide is ATP synthase subunit delta (Listeria welshimeri serovar 6b (strain ATCC 35897 / DSM 20650 / CCUG 15529 / CIP 8149 / NCTC 11857 / SLCC 5334 / V8)).